The chain runs to 355 residues: Glutamine synthetase root isozyme 4 (355 aa).

One can recognise a GS beta-grasp domain in the interval Ile19–Gly99. Positions Ala37–Glu66 are disordered. In terms of domain architecture, GS catalytic spans Lys106–Pro355.

The protein belongs to the glutamine synthetase family. Homooctamer. As to expression, found in all the tissues examined with higher expression found in tissues of the root, stem and seedling shoot.

Its subcellular location is the cytoplasm. It carries out the reaction L-glutamate + NH4(+) + ATP = L-glutamine + ADP + phosphate + H(+). Its function is as follows. Plays a role in the flow of nitrogen into nitrogenous organic compounds. The sequence is that of Glutamine synthetase root isozyme 4 (GLN5) from Zea mays (Maize).